The primary structure comprises 314 residues: Solute carrier family 25 member 44 (314 aa).

Solcar repeat units follow at residues 18-100 (KKFY…TRKF), 107-210 (SNTV…YAEQ), and 220-302 (PHIV…LKKL). The next 6 helical transmembrane spans lie at 20–42 (FYVF…TLIR), 71–90 (TGLY…GQCY), 113–133 (LVAG…IDVV), 185–201 (GYVA…AVWW), 222–239 (IVFQ…ASIL), and 278–296 (LSAR…VVGY).

It belongs to the mitochondrial carrier (TC 2.A.29) family.

It is found in the mitochondrion membrane. It catalyses the reaction L-valine(in) = L-valine(out). It carries out the reaction L-leucine(in) = L-leucine(out). Its function is as follows. Mitochondrial solute transporter which transports branched-chain amino acid (BCAA; valine, leucine and isoleucine) into mitochondria in brown adipose tissue (BAT). BAT is involved in BCAA catabolism and actively utilizes BCAA in the mitochondria for thermogenesis. In Pongo abelii (Sumatran orangutan), this protein is Solute carrier family 25 member 44.